The primary structure comprises 518 residues: Tyrosine/DOPA decarboxylase 1 (518 aa).

N6-(pyridoxal phosphate)lysine is present on Lys321.

The protein belongs to the group II decarboxylase family. In terms of assembly, homodimer. Pyridoxal 5'-phosphate serves as cofactor. In terms of tissue distribution, predominantly expressed in the roots.

It carries out the reaction L-tyrosine + H(+) = tyramine + CO2. The catalysed reaction is L-dopa + H(+) = dopamine + CO2. It catalyses the reaction 5-hydroxy-L-tryptophan + H(+) = serotonin + CO2. Marginally higher substrate specificity for L-DOPA over L-tyrosine. The chain is Tyrosine/DOPA decarboxylase 1 (TYDC1) from Papaver somniferum (Opium poppy).